The chain runs to 174 residues: MGKITFYEDRGFQGRHYECSTDHSNLQPYFSRCNSVRVDSGCWMLYEQPNFTGCQYFLRRGDYPDYQQWMGFSDSVRSCRLIPHSSSHRIRIYEREDYRGQMVEITDDCPHLQDRFHFSDFHSFHVMEGYWVLYEMPNYRGRQYLLRPGEYRRYHDWGAMNARVGSLRRIMDFY.

Beta/gamma crystallin 'Greek key' domains follow at residues 2–40 (GKIT…RVDS) and 41–83 (GCWM…RLIP). Positions 84–87 (HSSS) are connecting peptide. 2 consecutive Beta/gamma crystallin 'Greek key' domains span residues 88–128 (HRIR…HVME) and 129–171 (GYWV…RRIM).

The protein belongs to the beta/gamma-crystallin family. As to expression, detected in the superior olivary complex and fibers of the ventral aoustic stria of the auditory hindbrain.

Its function is as follows. Crystallins are the dominant structural components of the vertebrate eye lens. The sequence is that of Gamma-crystallin E (Cryge) from Rattus norvegicus (Rat).